Consider the following 455-residue polypeptide: Kynurenine 3-monooxygenase (455 aa).

Belongs to the aromatic-ring hydroxylase family. KMO subfamily. FAD serves as cofactor.

It catalyses the reaction L-kynurenine + NADPH + O2 + H(+) = 3-hydroxy-L-kynurenine + NADP(+) + H2O. Its pathway is cofactor biosynthesis; NAD(+) biosynthesis; quinolinate from L-kynurenine: step 1/3. Catalyzes the hydroxylation of L-kynurenine (L-Kyn) to form 3-hydroxy-L-kynurenine (L-3OHKyn). Required for synthesis of quinolinic acid. The chain is Kynurenine 3-monooxygenase from Xanthomonas oryzae pv. oryzae (strain PXO99A).